Reading from the N-terminus, the 355-residue chain is Peptide chain release factor 1 (355 aa).

Glutamine 231 is subject to N5-methylglutamine. Positions 283 to 303 (LAKESEARKSQVGSGDRSERI) are disordered.

The protein belongs to the prokaryotic/mitochondrial release factor family. Post-translationally, methylated by PrmC. Methylation increases the termination efficiency of RF1.

It is found in the cytoplasm. Its function is as follows. Peptide chain release factor 1 directs the termination of translation in response to the peptide chain termination codons UAG and UAA. In Campylobacter lari (strain RM2100 / D67 / ATCC BAA-1060), this protein is Peptide chain release factor 1.